An 838-amino-acid chain; its full sequence is MKVSRVLALVLGAVIPAHAAFSWKNVKLGGGGGFVPGIIFHPKTKGVAYARTDIGGLYRLNADDSWTAVTDGIADNAGWHNWGIDAVALDPQDDQKVYAAVGMYTNSWDPSNGAIIRSSDRGATWSFTNLPFKVGGNMPGRGAGERLAVDPANSNIIYFGARSGNGLWKSTDGGVTFSKVSSFTATGTYIPDPSDSNGYNSDKQGLMWVTFDSTSSTTGGATSRIFVGTADNITASVYVSTNAGSTWSAVPGQPGKYFPHKAKLQPAEKALYLTYSDGTGPYDGTLGSVWRYDIAGGTWKDITPVSGSDLYFGFGGLGLDLQKPGTLVVASLNSWWPDAQLFRSTDSGTTWSPIWAWASYPTETYYYSISTPKAPWIKNNFIDVTSESPSDGLIKRLGWMIESLEIDPTDSNHWLYGTGMTIFGGHDLTNWDTRHNVSIQSLADGIEEFSVQDLASAPGGSELLAAVGDDNGFTFASRNDLGTSPQTVWATPTWATSTSVDYAGNSVKSVVRVGNTAGTQQVAISSDGGATWSIDYAADTSMNGGTVAYSADGDTILWSTASSGVQRSQFQGSFASVSSLPAGAVIASDKKTNSVFYAGSGSTFYVSKDTGSSFTRGPKLGSAGTIRDIAAHPTTAGTLYVSTDVGIFRSTDSGTTFGQVSTALTNTYQIALGVGSGSNWNLYAFGTGPSGARLYASGDSGASWTDIQGSQGFGSIDSTKVAGSGSTAGQVYVGTNGRGVFYAQGTVGGGTGGTSSSTKQSSSSTSSASSSTTLRSSVVSTTRASTVTSSRTSSAAGPTGSGVAGHYAQCGGIGWTGPTQCVAPYVCQKQNDYYYQCV.

An N-terminal signal peptide occupies residues 1 to 19 (MKVSRVLALVLGAVIPAHA). Aspartate 53 serves as the catalytic Nucleophile. Asparagine 232 and asparagine 436 each carry an N-linked (GlcNAc...) asparagine glycan. Catalysis depends on aspartate 469, which acts as the Proton donor. A disordered region spans residues 750-801 (GTGGTSSSTKQSSSSTSSASSSTTLRSSVVSTTRASTVTSSRTSSAAGPTGS). Positions 754–797 (TSSSTKQSSSSTSSASSSTTLRSSVVSTTRASTVTSSRTSSAAG) are enriched in low complexity. A CBM1 domain is found at 802–838 (GVAGHYAQCGGIGWTGPTQCVAPYVCQKQNDYYYQCV).

Belongs to the glycosyl hydrolase 74 family.

The catalysed reaction is Hydrolysis of (1-&gt;4)-D-glucosidic linkages in xyloglucans so as to successively remove oligosaccharides from the newly-formed chain end after endo-initiation on a polymer molecule.. In terms of biological role, hydrolyzes the glucosidic bonds of unbranched Glc residues in tamarind seed xyloglucan, producing XXXG, XLXG, XXLG and XLLG. Has a low activity against beta-glucan and carboxymethylcellulose. Not active against Avicel, laminarin, xylan, galactomannan, linear and branched arabinans, galactan, polygalacturonic acid, starch, beta-D-Glcp, beta-D-cellobiose, beta-D-Galp, beta-D-Xylp, alpha-D-Xylp, alpha-L-Araf and alpha-L-Arap. This Hypocrea jecorina (strain QM6a) (Trichoderma reesei) protein is Xyloglucanase.